The chain runs to 1627 residues: Type III effector DspE (1627 aa).

Composition is skewed to polar residues over residues 22-44 (AKTS…SLIQ) and 59-74 (GNGS…STTL). Disordered regions lie at residues 22 to 102 (AKTS…GPIQ) and 436 to 464 (QTQA…TPGW). 3 consecutive short sequence motifs (wxxxE) follow at residues 464–468 (WNLSD), 514–520 (WEASSVE), and 660–667 (WQNAANHD).

This sequence belongs to the AvrE family.

Its subcellular location is the secreted. It is found in the host cell. Functionally, major virulence factor that may function as a water- and solute-permeable channel dedicated to creating osmotic/water potential perturbation and a water- and nutrient-rich apoplast in which bacteria multiply within the infected plant tissues. In terms of biological role, required for plant cell death in N.benthamiana leaves and leaf cell death in S.tuberosum. Essential for pathogenicity. Does not suppress callose formation. The protein is Type III effector DspE of Pectobacterium carotovorum (Erwinia carotovora).